The primary structure comprises 710 residues: Protein-glutamine gamma-glutamyltransferase Z (710 aa).

Active-site residues include Cys-279, His-338, and Asp-361. Ca(2+) is bound by residues Asn-401, Asp-403, Glu-450, and Glu-455.

The protein belongs to the transglutaminase superfamily. Transglutaminase family. It depends on Ca(2+) as a cofactor. Widely expressed.

It carries out the reaction L-glutaminyl-[protein] + L-lysyl-[protein] = [protein]-L-lysyl-N(6)-5-L-glutamyl-[protein] + NH4(+). Its function is as follows. Catalyzes the cross-linking of proteins and the conjugation of polyamines to proteins. This Homo sapiens (Human) protein is Protein-glutamine gamma-glutamyltransferase Z (TGM7).